Reading from the N-terminus, the 3013-residue chain is Protein furry homolog-like (3013 aa).

S2 is modified (N-acetylserine). The tract at residues 90–109 (DESYEYRPRSSTKSKGDEQQ) is disordered. S844 carries the post-translational modification Phosphoserine. 2 disordered regions span residues 878–897 (SSST…LAST) and 1476–1498 (VTSG…PDNK). Over residues 1476-1486 (VTSGTTSSSNT) the composition is skewed to low complexity. A phosphoserine mark is found at S1914, S1935, S1941, S1945, and S1957. T1959 is subject to Phosphothreonine. Residues S1978, S2272, and S2454 each carry the phosphoserine modification. Residues 2459-2492 (DKGDTPSLQEYQCSSSTPSLNLTNQEDTDESSEE) are disordered. The segment covering 2464–2483 (PSLQEYQCSSSTPSLNLTNQ) has biased composition (polar residues). Residue S2499 is modified to Phosphoserine. Disordered stretches follow at residues 2508–2567 (LNSD…DTTS) and 2636–2660 (EEEA…EVQT). Composition is skewed to polar residues over residues 2528–2539 (SEDSTGSITTEE) and 2555–2567 (DNAN…DTTS).

The protein belongs to the furry protein family. As to expression, widely expressed with higher expression in colon, placenta, brain and cells of lymphoid origin.

Functionally, plays a key role in maintaining the integrity of polarized cell extensions during morphogenesis, regulates the actin cytoskeleton and plays a key role in patterning sensory neuron dendritic fields by promoting avoidance between homologous dendrites as well as by limiting dendritic branching. May function as a transcriptional activator. This is Protein furry homolog-like (FRYL) from Homo sapiens (Human).